A 142-amino-acid polypeptide reads, in one-letter code: Serine/threonine-protein kinase BtrW (142 aa).

The protein belongs to the anti-sigma-factor family. As to quaternary structure, probably able to multimerize; interacts with BtrV.

It carries out the reaction L-seryl-[protein] + ATP = O-phospho-L-seryl-[protein] + ADP + H(+). The catalysed reaction is L-threonyl-[protein] + ATP = O-phospho-L-threonyl-[protein] + ADP + H(+). Its function is as follows. Possible negative regulator of sigma-B activity. Phosphorylates and inactivates its specific antagonist protein, BtrV. Upon phosphorylation of BtrV, BtrW is released and binds to an unknown partner(s) that might be sigma-B, thereby blocking its ability to form a complex with its partner (possibly an RNA polymerase holoenzyme (E-sigma-B)). Involved in type III secretion system (T3SS). Phosphorylates BtrV. The polypeptide is Serine/threonine-protein kinase BtrW (btrW) (Bordetella bronchiseptica (strain ATCC BAA-588 / NCTC 13252 / RB50) (Alcaligenes bronchisepticus)).